The sequence spans 320 residues: Putative olfactory receptor 2W5 pseudogene (320 aa).

Residue N5 is glycosylated (N-linked (GlcNAc...) asparagine). 4 consecutive transmembrane segments (helical) span residues 30-50 (VILI…LLLV), 58-78 (PMYF…ASIA), 98-118 (VAQL…LVVM), and 140-160 (LCLQ…FIMC). C97 and C179 are joined by a disulfide. The tract at residues 267-320 (LPRSGEVPDSLLHHRHSQHQPPHLHFEEQGCEGDHEETSGVGERGWGASTRGTL) is disordered. Basic and acidic residues predominate over residues 290–304 (LHFEEQGCEGDHEET).

Belongs to the G-protein coupled receptor 1 family.

Its subcellular location is the cell membrane. Its function is as follows. Odorant receptor. The protein is Putative olfactory receptor 2W5 pseudogene of Homo sapiens (Human).